Reading from the N-terminus, the 155-residue chain is Acetylaranotin biosynthesis cluster protein L (155 aa).

The protein operates within mycotoxin biosynthesis. Its function is as follows. Nonribosomal peptide synthetase; part of the gene cluster that mediates the biosynthesis of acetylaranotin, a member of the epipolythiodioxopiperazine (ETP) class of toxins characterized by a disulfide-bridged cyclic dipeptide. The first step of acetylaranotin biosynthesis is performed by the NRPS ataP which produces diketopiperazine cyclo-L-Phe-L-Phe via the condensation of 2 phenylalanines (L-Phe). The ataC domain of ataTC then catalyzes the formation of bishydroxylation of cyclo-L-Phe-L-Phe. The glutathione S-transferase domain ataG in ataIMG further catalyzes the conjugation of two glutathiones to the bishydroxylated intermediate. Next, the dipeptidase ataJ removes the Glu residues. The following step is performed by the carbon sulfur lyase domain ataI of ataIMG which may convert the bis-cysteinyl adduct to yield an epidithiol intermediate. The ataT domain from ataTC then catalyzes the oxidation of the free dithiols, followed by a cyclization step catalyzed by the cytochrome P450 ataF. AtaF probably acts as an epoxidase to promote a dual epoxidation formation at C8 and C9 along with C8' and C9', followed by the spontaneous nucleophilic attack of the amide nitrogens N10 and N10' to yield an intermediate with the pyrrolidine partial structure. The final steps of acetylaranotin biosynthesis involve the acetylation and ring rearrangement of an epitetrathiodiketopiperazine intermediate to produce acetylaranotin. AtaH probably catalyzes the acetylation of epitetrathiodiketopiperazine to produce a diacetate and ataY is responsible for the formation of the dihydrooxepin moiety that converts the diacetate intermediate to acetylaranotin via acetylapoaranotin. Both enzymes could function independently in the absence of the other. The specific function of ataL within the pathway has still to be determined. The acetylaranotin bis-thiomethyltransferase ataS located outside of acetylaranotin gene cluster is the main thiomethyltransferase responsible for converting acetylaranotin and its related intermediates to their methylated forms. The polypeptide is Acetylaranotin biosynthesis cluster protein L (Aspergillus terreus (strain NIH 2624 / FGSC A1156)).